The sequence spans 71 residues: Vitellogenin-B2 (71 aa).

Residues 1 to 15 (MRGIILALLLALAGC) form the signal peptide. Residues 24–71 (FSESKTYVYNYEGIILNGIPENGLARSGIKLNCKVELSGYAQRSYMLK) form the Vitellogenin domain.

As to expression, produced by the liver, secreted into the blood and then sequestered by receptor mediated endocytosis into growing oocytes, where it is generally cleaved, giving rise to the respective yolk components.

Precursor of the major egg-yolk proteins that are sources of nutrients during early development of oviparous organisms. This is Vitellogenin-B2 from Xenopus laevis (African clawed frog).